Consider the following 110-residue polypeptide: UPF0122 protein RBAM_015800 (110 aa).

It belongs to the UPF0122 family.

Its function is as follows. Might take part in the signal recognition particle (SRP) pathway. This is inferred from the conservation of its genetic proximity to ftsY/ffh. May be a regulatory protein. The sequence is that of UPF0122 protein RBAM_015800 from Bacillus velezensis (strain DSM 23117 / BGSC 10A6 / LMG 26770 / FZB42) (Bacillus amyloliquefaciens subsp. plantarum).